The sequence spans 205 residues: MIVSLIATVLFGYLLGSVSFSYIIAKKIKKIDIRSEGSGNAGATNTLRVLGIGPAICVLLLDVAKGVAPALLAIALTNGDYPLVPALAGLAAILGHNWPIYFGFRGGKGVATSIGVVATLLFLPALCAGIVAILSIVFTKYVSLGSLLFAVLTPIAALIMLPFFHYPLEYIYLAVLLAILSLWRHRTNMGRLIAGTENKLGKKHA.

6 consecutive transmembrane segments (helical) span residues L5 to A25, I56 to L76, V84 to F104, I114 to L134, L144 to F164, and H165 to H185.

Belongs to the PlsY family. Probably interacts with PlsX.

It is found in the cell membrane. The enzyme catalyses an acyl phosphate + sn-glycerol 3-phosphate = a 1-acyl-sn-glycero-3-phosphate + phosphate. It functions in the pathway lipid metabolism; phospholipid metabolism. Its function is as follows. Catalyzes the transfer of an acyl group from acyl-phosphate (acyl-PO(4)) to glycerol-3-phosphate (G3P) to form lysophosphatidic acid (LPA). This enzyme utilizes acyl-phosphate as fatty acyl donor, but not acyl-CoA or acyl-ACP. This is Glycerol-3-phosphate acyltransferase from Shouchella clausii (strain KSM-K16) (Alkalihalobacillus clausii).